Consider the following 240-residue polypeptide: Uridylate kinase (240 aa).

12–15 lines the ATP pocket; the sequence is KLSG. The involved in allosteric activation by GTP stretch occupies residues 20 to 25; the sequence is GEKGFG. UMP is bound at residue G54. ATP-binding residues include G55 and R59. UMP contacts are provided by residues D74 and 135–142; that span reads TGSPYFST. The ATP site is built by N163, Y169, and D172.

It belongs to the UMP kinase family. In terms of assembly, homohexamer.

The protein resides in the cytoplasm. It carries out the reaction UMP + ATP = UDP + ADP. It participates in pyrimidine metabolism; CTP biosynthesis via de novo pathway; UDP from UMP (UMPK route): step 1/1. Allosterically activated by GTP. Inhibited by UTP. Its function is as follows. Catalyzes the reversible phosphorylation of UMP to UDP. This Lactiplantibacillus plantarum (strain ATCC BAA-793 / NCIMB 8826 / WCFS1) (Lactobacillus plantarum) protein is Uridylate kinase.